Here is a 435-residue protein sequence, read N- to C-terminus: 3-ketoacyl-CoA thiolase (435 aa).

The active-site Acyl-thioester intermediate is the Cys-98. Active-site proton acceptor residues include His-391 and Cys-421.

The protein belongs to the thiolase-like superfamily. Thiolase family. As to quaternary structure, heterotetramer of two alpha chains (FadJ) and two beta chains (FadI).

The protein localises to the cytoplasm. The catalysed reaction is an acyl-CoA + acetyl-CoA = a 3-oxoacyl-CoA + CoA. It participates in lipid metabolism; fatty acid beta-oxidation. Catalyzes the final step of fatty acid oxidation in which acetyl-CoA is released and the CoA ester of a fatty acid two carbons shorter is formed. The sequence is that of 3-ketoacyl-CoA thiolase from Colwellia psychrerythraea (strain 34H / ATCC BAA-681) (Vibrio psychroerythus).